The following is a 278-amino-acid chain: Short-chain dehydrogenase RED2 (278 aa).

7 residues coordinate NADP(+): isoleucine 15, aspartate 70, arginine 132, tyrosine 178, lysine 182, valine 211, and threonine 213. Catalysis depends on tyrosine 178, which acts as the Proton donor. Lysine 182 acts as the Lowers pKa of active site Tyr in catalysis.

It belongs to the short-chain dehydrogenases/reductases (SDR) family.

It participates in polyketide biosynthesis. Short-chain dehydrogenase; part of the gene cluster that mediates the biosynthesis of pyriculol and pyriculariol, two heptaketides that induce lesion formation upon application on rice leaves but are dispensable for pathogenicity. The highly reducing polyketide synthase synthesizes the heptaketide backbone of pyriculol and pyriculariol. Pyriculol and pyriculariol contain several hydroxyl moieties and double bonds, so it can be assumed that several reduction steps occur during biosynthesis. These reactions could be executed by PKS19 itself or partly by the tailoring enzymes OXR1, OXR2, RED1, RED2 or RED3, identified within the cluster. The FAD-linked oxidoreductase OXR1 is the only tailoring enzyme for which the function has been determined yet, and is involved in the oxidation of dihydropyriculol and dihydropyriculariol into pyriculol and pyriculariol, respectively. This is Short-chain dehydrogenase RED2 from Pyricularia oryzae (strain 70-15 / ATCC MYA-4617 / FGSC 8958) (Rice blast fungus).